The following is a 312-amino-acid chain: Glyoxylate/hydroxypyruvate reductase A (312 aa).

Arg-227 is an active-site residue. Catalysis depends on His-275, which acts as the Proton donor.

Belongs to the D-isomer specific 2-hydroxyacid dehydrogenase family. GhrA subfamily.

It localises to the cytoplasm. It catalyses the reaction glycolate + NADP(+) = glyoxylate + NADPH + H(+). The enzyme catalyses (R)-glycerate + NAD(+) = 3-hydroxypyruvate + NADH + H(+). The catalysed reaction is (R)-glycerate + NADP(+) = 3-hydroxypyruvate + NADPH + H(+). Its function is as follows. Catalyzes the NADPH-dependent reduction of glyoxylate and hydroxypyruvate into glycolate and glycerate, respectively. This Escherichia coli (strain 55989 / EAEC) protein is Glyoxylate/hydroxypyruvate reductase A.